The sequence spans 414 residues: Nucleoporin NUP42 (414 aa).

Residues Met-1–Gly-25 form a C3H1-type zinc finger. Disordered stretches follow at residues Thr-24–Ala-73 and Pro-200–Phe-221. FG repeat units follow at residues Phe-43–Gly-44, Phe-207–Gly-208, Phe-214–Gly-215, Phe-221–Gly-222, Phe-233–Gly-234, Phe-238–Gly-239, Phe-257–Gly-258, Phe-268–Gly-269, Phe-280–Gly-281, Phe-306–Gly-307, Phe-325–Gly-326, Phe-329–Gly-330, Phe-335–Gly-336, Phe-341–Gly-342, Phe-347–Gly-348, Phe-351–Gly-352, and Phe-362–Gly-363.

Probable component of the nuclear pore complex (NPC).

It localises to the nucleus. The protein localises to the nuclear pore complex. The protein resides in the nucleus membrane. Its function is as follows. Required for the export of mRNAs containing poly(A) tails from the nucleus into the cytoplasm. The chain is Nucleoporin NUP42 (nup42) from Danio rerio (Zebrafish).